The chain runs to 425 residues: UPF0597 protein VSAL_I0741 (425 aa).

This sequence belongs to the UPF0597 family.

The sequence is that of UPF0597 protein VSAL_I0741 from Aliivibrio salmonicida (strain LFI1238) (Vibrio salmonicida (strain LFI1238)).